The sequence spans 557 residues: Aerobic glycerol-3-phosphate dehydrogenase (557 aa).

FAD is bound at residue 21-49 (DLVIIGGGITGAGIALDASERGMKVALVE).

The protein belongs to the FAD-dependent glycerol-3-phosphate dehydrogenase family. It depends on FAD as a cofactor.

The protein localises to the cytoplasm. It carries out the reaction a quinone + sn-glycerol 3-phosphate = dihydroxyacetone phosphate + a quinol. It functions in the pathway polyol metabolism; glycerol degradation via glycerol kinase pathway; glycerone phosphate from sn-glycerol 3-phosphate (aerobic route): step 1/1. The sequence is that of Aerobic glycerol-3-phosphate dehydrogenase (glpD) from Staphylococcus aureus (strain USA300).